Consider the following 1228-residue polypeptide: Ribosomal RNA-processing protein 12 (1228 aa).

Residues serine 1059 and serine 1067 each carry the phosphoserine modification. Residues 1168-1228 (GPVRGQRNKL…GPKFKSRKKL (61 aa)) form a disordered region. Basic residues predominate over residues 1212-1228 (IGKHNKKGPKFKSRKKL).

It belongs to the RRP12 family. In terms of assembly, interacts with GSP1.

The protein localises to the cytoplasm. The protein resides in the nucleus. It localises to the nucleolus. In terms of biological role, in association with GSP1, required for nuclear export of both pre-40S and pre-60S ribosomal subunits. Required for the late maturation of the 18S and 5.8S rRNA of the pre-40S ribosomes and for maturation of the 25S and 5.8S rRNA of the pre-60S ribosomes. This chain is Ribosomal RNA-processing protein 12 (RRP12), found in Saccharomyces cerevisiae (strain ATCC 204508 / S288c) (Baker's yeast).